The primary structure comprises 473 residues: UTP--glucose-1-phosphate uridylyltransferase (473 aa).

UTP-binding positions include 89-92 (LNGG), lysine 103, glutamine 166, and glycine 195. A substrate-binding site is contributed by 91–92 (GG). Substrate is bound by residues histidine 196 and 224–226 (NSD). Residues aspartate 226 and lysine 364 each contribute to the UTP site.

Belongs to the UDPGP type 1 family.

Its subcellular location is the cytoplasm. It catalyses the reaction alpha-D-glucose 1-phosphate + UTP + H(+) = UDP-alpha-D-glucose + diphosphate. Its function is as follows. Plays a central role as a glucosyl donor in cellular metabolic pathways. The sequence is that of UTP--glucose-1-phosphate uridylyltransferase from Hordeum vulgare (Barley).